Here is a 200-residue protein sequence, read N- to C-terminus: dTTP/UTP pyrophosphatase (200 aa).

Asp-81 (proton acceptor) is an active-site residue.

Belongs to the Maf family. YhdE subfamily. Requires a divalent metal cation as cofactor.

The protein localises to the cytoplasm. It catalyses the reaction dTTP + H2O = dTMP + diphosphate + H(+). The catalysed reaction is UTP + H2O = UMP + diphosphate + H(+). Functionally, nucleoside triphosphate pyrophosphatase that hydrolyzes dTTP and UTP. May have a dual role in cell division arrest and in preventing the incorporation of modified nucleotides into cellular nucleic acids. The chain is dTTP/UTP pyrophosphatase from Cupriavidus metallidurans (strain ATCC 43123 / DSM 2839 / NBRC 102507 / CH34) (Ralstonia metallidurans).